Here is a 96-residue protein sequence, read N- to C-terminus: UPF0235 protein VV2877 (96 aa).

Belongs to the UPF0235 family.

This Vibrio vulnificus (strain YJ016) protein is UPF0235 protein VV2877.